Reading from the N-terminus, the 1135-residue chain is Glutamate receptor ionotropic, NMDA 3A (1135 aa).

The signal sequence occupies residues 1 to 23 (MRRLSLWWLLSRVCLLLPPPCAL). The Extracellular segment spans residues 24–674 (VLAGVPSSSS…PIGAFMWPLH (651 aa)). The disordered stretch occupies residues 60–117 (TAPRAASRAQEGGRAGAQRDDPESGTWRPPAPSQGARWLGSALHGRGPPGSRKLGEGA). 10 N-linked (GlcNAc...) asparagine glycosylation sites follow: asparagine 145, asparagine 264, asparagine 275, asparagine 285, asparagine 296, asparagine 300, asparagine 426, asparagine 439, asparagine 549, and asparagine 565. 2 disulfide bridges follow: cysteine 537–cysteine 575 and cysteine 543–cysteine 576. Glycine-binding residues include serine 631, serine 633, and arginine 638. Residues serine 633 and arginine 638 each contribute to the D-serine site. The helical transmembrane segment at 675–694 (WTMWLGIFVALHITAIFLTL) threads the bilayer. Residues 695–715 (YEWKSPFGMTPKGRNRNKVFS) lie on the Cytoplasmic side of the membrane. The discontinuously helical intramembrane region spans 716–727 (FSSALNVCYALL). The Cytoplasmic segment spans residues 728-741 (FGRTAAIKPPKCWT). Residues 742–761 (GRFLMNLWAIFCMFCLSTYT) form a helical membrane-spanning segment. Topologically, residues 762-932 (ANLAAVMVGE…TLQMGIKHFS (171 aa)) are extracellular. Glycine is bound at residue serine 801. D-serine-binding residues include serine 801, alanine 802, and aspartate 845. Residue aspartate 845 participates in glycine binding. Cysteine 859 and cysteine 913 are joined by a disulfide. A glycan (N-linked (GlcNAc...) asparagine) is linked at asparagine 886. Residues 933–948 (GLFVLLCIGFGLSILT) traverse the membrane as a helical segment. At 949-1135 (TIGEHIVHRL…YQKTNRTCES (187 aa)) the chain is on the cytoplasmic side. The interval 951-987 (GEHIVHRLLLPRIKNKSKLQYWLHTSQRFHRALNTSF) is PPP2CB binding site. Residues 1080–1129 (TTNGKADSLNVTRSSVIQELSELEKQIQVIRQELQLAVSRKTELEEYQKT) are a coiled coil. The GIT1-binding stretch occupies residues 1082–1115 (NGKADSLNVTRSSVIQELSELEKQIQVIRQELQL).

It belongs to the glutamate-gated ion channel (TC 1.A.10.1) family. NR3A/GRIN3A subfamily. In terms of assembly, heterotetramer. Forms heterotetrameric channels composed of two GluN1/zeta subunits (GRIN1), and two identical GluN3 subunits (GRIN3A or GRIN3B) (in vitro). Can also form heterotetrameric channels that contain at least two GluN1 subunits and at least a combination of one GluN2 and one GluN3 subunits (in vitro). Does not form functional homomeric channels. Found in a complex with GRIN1, GRIN2A or GRIN2B and PPP2CB. Probably interacts with PPP2CB. No complex with PPP2CB is detected when NMDARs are stimulated by NMDA. Interacts (via C-terminus) with GIT1, but not with GRIA1/GluA1, nor with synaptophysin/SYP; this interaction competes with GIT1 interaction with ARHGEF7/beta-PIX. N-glycosylated. In terms of tissue distribution, isoform 1 and isoform 2 are expressed in olfactory bulb, frontal occipital, entorhinal and pyriform cortices, hippocampus, striatum, thalamus, cerebellum and spinal cord.

It localises to the cell membrane. The protein localises to the postsynaptic cell membrane. Its subcellular location is the postsynaptic density. It catalyses the reaction Ca(2+)(in) = Ca(2+)(out). The catalysed reaction is Na(+)(in) = Na(+)(out). With respect to regulation, excitatory glycine receptors are inhibited by D-serine at a concentrion of 10uM. Its function is as follows. Component of a non-conventional N-methyl-D-aspartate (NMDA) receptors (NMDARs) that function as heterotetrameric, ligand-gated cation channels with low calcium permeability and low voltage-dependent block by Mg(2+). During the development of neural circuits, participates in the synaptic refinement period, restricting spine maturation and growth. Forms glutamatergic receptor complexes with GluN1 and GluN2 subunits which are activated by glycine binding to the GluN1 and GluN3 subunits and L-glutamate binding to GluN2 subunits. Forms excitatory glycinergic receptor complexes with GluN1 alone which are activated by glycine binding to the GluN1 and GluN3 subunits. GluN3A subunit also binds D-serine. Each GluN3 subunit confers differential attributes to channel properties, including activation, deactivation and desensitization kinetics, pH sensitivity, Ca2(+) permeability, and binding to allosteric modulators. By competing with GIT1 interaction with ARHGEF7/beta-PIX, may reduce GIT1/ARHGEF7-regulated local activation of RAC1, hence affecting signaling and limiting the maturation and growth of inactive synapses. This is Glutamate receptor ionotropic, NMDA 3A from Rattus norvegicus (Rat).